The following is a 171-amino-acid chain: Neuronal vesicle trafficking-associated protein 2 (171 aa).

Residues 1 to 10 (MVKLNSNPSE) are compositionally biased toward polar residues. The tract at residues 1-21 (MVKLNSNPSEKGTKPPSVEDG) is disordered. Residues 1–71 (MVKLNSNPSE…FRVPKIAEFT (71 aa)) lie on the Cytoplasmic side of the membrane. The chain crosses the membrane as a helical; Signal-anchor for type II membrane protein span at residues 72–92 (VTILVSLALAFLACIVFLVVY). Residues 93-171 (KAFTYDHSCP…EPKPPKTQGH (79 aa)) lie on the Lumenal side of the membrane.

It belongs to the NSG family.

It is found in the membrane. The protein localises to the golgi apparatus. It localises to the trans-Golgi network membrane. The protein resides in the cell projection. Its subcellular location is the dendrite. It is found in the endosome membrane. The protein localises to the early endosome membrane. It localises to the late endosome membrane. The protein resides in the lysosome lumen. Its subcellular location is the cytoplasmic vesicle membrane. It is found in the golgi stack membrane. The protein localises to the endosome. It localises to the multivesicular body membrane. The chain is Neuronal vesicle trafficking-associated protein 2 from Homo sapiens (Human).